Here is a 542-residue protein sequence, read N- to C-terminus: Glucans biosynthesis protein G (542 aa).

Residues 1 to 34 (MVSLLRCPSSKPYSSLICSLTLGAVVALSGVAYA) form the signal peptide.

The protein belongs to the OpgD/OpgG family.

Its subcellular location is the periplasm. Its pathway is glycan metabolism; osmoregulated periplasmic glucan (OPG) biosynthesis. Its function is as follows. Involved in the biosynthesis of osmoregulated periplasmic glucans (OPGs). This chain is Glucans biosynthesis protein G, found in Shewanella baltica (strain OS155 / ATCC BAA-1091).